Consider the following 274-residue polypeptide: Large ribosomal subunit protein uL2 (274 aa).

Residues 223-274 (VVMNPVDHPHGGGEGRTSGGRHPVSPWGVPTKGYKTRSNKRTDKYIVRRRNK) are disordered.

It belongs to the universal ribosomal protein uL2 family. As to quaternary structure, part of the 50S ribosomal subunit. Forms a bridge to the 30S subunit in the 70S ribosome.

Functionally, one of the primary rRNA binding proteins. Required for association of the 30S and 50S subunits to form the 70S ribosome, for tRNA binding and peptide bond formation. It has been suggested to have peptidyltransferase activity; this is somewhat controversial. Makes several contacts with the 16S rRNA in the 70S ribosome. The protein is Large ribosomal subunit protein uL2 of Vibrio cholerae serotype O1 (strain M66-2).